We begin with the raw amino-acid sequence, 165 residues long: Large ribosomal subunit protein uL10 (165 aa).

The protein belongs to the universal ribosomal protein uL10 family. As to quaternary structure, part of the ribosomal stalk of the 50S ribosomal subunit. The N-terminus interacts with L11 and the large rRNA to form the base of the stalk. The C-terminus forms an elongated spine to which L12 dimers bind in a sequential fashion forming a multimeric L10(L12)X complex.

Functionally, forms part of the ribosomal stalk, playing a central role in the interaction of the ribosome with GTP-bound translation factors. The chain is Large ribosomal subunit protein uL10 from Enterobacter sp. (strain 638).